Consider the following 316-residue polypeptide: Transaldolase (316 aa).

K132 (schiff-base intermediate with substrate) is an active-site residue.

This sequence belongs to the transaldolase family. Type 1 subfamily. Homodimer.

The protein localises to the cytoplasm. The enzyme catalyses D-sedoheptulose 7-phosphate + D-glyceraldehyde 3-phosphate = D-erythrose 4-phosphate + beta-D-fructose 6-phosphate. It participates in carbohydrate degradation; pentose phosphate pathway; D-glyceraldehyde 3-phosphate and beta-D-fructose 6-phosphate from D-ribose 5-phosphate and D-xylulose 5-phosphate (non-oxidative stage): step 2/3. Transaldolase is important for the balance of metabolites in the pentose-phosphate pathway. This Aliivibrio salmonicida (strain LFI1238) (Vibrio salmonicida (strain LFI1238)) protein is Transaldolase.